The chain runs to 777 residues: DNA ligase (777 aa).

Residues 35-39 (DAEYD), 84-85 (SL), and Glu-116 each bind NAD(+). The N6-AMP-lysine intermediate role is filled by Lys-118. NAD(+) is bound by residues Arg-139, Glu-176, Lys-293, and Lys-317. Cys-411, Cys-414, Cys-429, and Cys-435 together coordinate Zn(2+). Positions 691 to 777 (MESQPLEGQT…NQHGIDPGAL (87 aa)) constitute a BRCT domain.

The protein belongs to the NAD-dependent DNA ligase family. LigA subfamily. The cofactor is Mg(2+). It depends on Mn(2+) as a cofactor.

The enzyme catalyses NAD(+) + (deoxyribonucleotide)n-3'-hydroxyl + 5'-phospho-(deoxyribonucleotide)m = (deoxyribonucleotide)n+m + AMP + beta-nicotinamide D-nucleotide.. DNA ligase that catalyzes the formation of phosphodiester linkages between 5'-phosphoryl and 3'-hydroxyl groups in double-stranded DNA using NAD as a coenzyme and as the energy source for the reaction. It is essential for DNA replication and repair of damaged DNA. This Alcanivorax borkumensis (strain ATCC 700651 / DSM 11573 / NCIMB 13689 / SK2) protein is DNA ligase.